The primary structure comprises 569 residues: Urease subunit alpha (569 aa).

Ni(2+) contacts are provided by His-136, His-138, and Lys-219. Lys-219 carries the post-translational modification N6-carboxylysine. His-221 provides a ligand contact to substrate. His-248 and His-274 together coordinate Ni(2+). His-322 functions as the Proton donor in the catalytic mechanism. Asp-362 is a Ni(2+) binding site.

The protein belongs to the metallo-dependent hydrolases superfamily. Urease alpha subunit family. Heterotrimer of UreA (gamma), UreB (beta) and UreC (alpha) subunits. Three heterotrimers associate to form the active enzyme. Requires Ni cation as cofactor. In terms of processing, carboxylation allows a single lysine to coordinate two nickel ions.

It localises to the cytoplasm. It catalyses the reaction urea + 2 H2O + H(+) = hydrogencarbonate + 2 NH4(+). Its pathway is nitrogen metabolism; urea degradation; CO(2) and NH(3) from urea (urease route): step 1/1. This Dinoroseobacter shibae (strain DSM 16493 / NCIMB 14021 / DFL 12) protein is Urease subunit alpha.